A 233-amino-acid polypeptide reads, in one-letter code: tRNA (guanine-N(1)-)-methyltransferase (233 aa).

S-adenosyl-L-methionine contacts are provided by residues glycine 113 and 133–138 (VGDYVL).

This sequence belongs to the RNA methyltransferase TrmD family. As to quaternary structure, homodimer.

It is found in the cytoplasm. It catalyses the reaction guanosine(37) in tRNA + S-adenosyl-L-methionine = N(1)-methylguanosine(37) in tRNA + S-adenosyl-L-homocysteine + H(+). Functionally, specifically methylates guanosine-37 in various tRNAs. This Rhizobium etli (strain ATCC 51251 / DSM 11541 / JCM 21823 / NBRC 15573 / CFN 42) protein is tRNA (guanine-N(1)-)-methyltransferase.